Consider the following 436-residue polypeptide: Trigger factor (436 aa).

The region spanning 162-247 (GDRVIIDFEG…LNNVSEATLP (86 aa)) is the PPIase FKBP-type domain.

It belongs to the FKBP-type PPIase family. Tig subfamily.

The protein localises to the cytoplasm. It carries out the reaction [protein]-peptidylproline (omega=180) = [protein]-peptidylproline (omega=0). Functionally, involved in protein export. Acts as a chaperone by maintaining the newly synthesized protein in an open conformation. Functions as a peptidyl-prolyl cis-trans isomerase. In Neisseria meningitidis serogroup C (strain 053442), this protein is Trigger factor.